A 338-amino-acid polypeptide reads, in one-letter code: Aspartate carbamoyltransferase catalytic subunit (338 aa).

R72 and T73 together coordinate carbamoyl phosphate. Residue K100 coordinates L-aspartate. The carbamoyl phosphate site is built by R122, H152, and Q155. L-aspartate-binding residues include R186 and R243. 2 residues coordinate carbamoyl phosphate: G284 and P285.

It belongs to the aspartate/ornithine carbamoyltransferase superfamily. ATCase family. In terms of assembly, heterododecamer (2C3:3R2) of six catalytic PyrB chains organized as two trimers (C3), and six regulatory PyrI chains organized as three dimers (R2).

It carries out the reaction carbamoyl phosphate + L-aspartate = N-carbamoyl-L-aspartate + phosphate + H(+). It functions in the pathway pyrimidine metabolism; UMP biosynthesis via de novo pathway; (S)-dihydroorotate from bicarbonate: step 2/3. Its function is as follows. Catalyzes the condensation of carbamoyl phosphate and aspartate to form carbamoyl aspartate and inorganic phosphate, the committed step in the de novo pyrimidine nucleotide biosynthesis pathway. In Acinetobacter baumannii (strain ACICU), this protein is Aspartate carbamoyltransferase catalytic subunit.